Here is a 267-residue protein sequence, read N- to C-terminus: Tryptophan synthase alpha chain (267 aa).

Residues Glu-47 and Asp-58 each act as proton acceptor in the active site.

Belongs to the TrpA family. As to quaternary structure, tetramer of two alpha and two beta chains.

It catalyses the reaction (1S,2R)-1-C-(indol-3-yl)glycerol 3-phosphate + L-serine = D-glyceraldehyde 3-phosphate + L-tryptophan + H2O. The protein operates within amino-acid biosynthesis; L-tryptophan biosynthesis; L-tryptophan from chorismate: step 5/5. Functionally, the alpha subunit is responsible for the aldol cleavage of indoleglycerol phosphate to indole and glyceraldehyde 3-phosphate. The sequence is that of Tryptophan synthase alpha chain from Chlorobium phaeobacteroides (strain DSM 266 / SMG 266 / 2430).